Consider the following 83-residue polypeptide: Cell division topological specificity factor (83 aa).

Belongs to the MinE family.

Its function is as follows. Prevents the cell division inhibition by proteins MinC and MinD at internal division sites while permitting inhibition at polar sites. This ensures cell division at the proper site by restricting the formation of a division septum at the midpoint of the long axis of the cell. The chain is Cell division topological specificity factor from Acidithiobacillus ferrooxidans (strain ATCC 23270 / DSM 14882 / CIP 104768 / NCIMB 8455) (Ferrobacillus ferrooxidans (strain ATCC 23270)).